The chain runs to 121 residues: Large ribosomal subunit protein bL12 (121 aa).

It belongs to the bacterial ribosomal protein bL12 family. In terms of assembly, homodimer. Part of the ribosomal stalk of the 50S ribosomal subunit. Forms a multimeric L10(L12)X complex, where L10 forms an elongated spine to which 2 to 4 L12 dimers bind in a sequential fashion. Binds GTP-bound translation factors.

In terms of biological role, forms part of the ribosomal stalk which helps the ribosome interact with GTP-bound translation factors. Is thus essential for accurate translation. The chain is Large ribosomal subunit protein bL12 from Serratia proteamaculans (strain 568).